The chain runs to 136 residues: Histone H2B.5 (136 aa).

Over residues 1-36 the composition is skewed to basic and acidic residues; it reads MAPKAEKKPAAEKKPVETEKKPKAEKRVPGKDGGAD. Residues 1–44 form a disordered region; sequence MAPKAEKKPAAEKKPVETEKKPKAEKRVPGKDGGADKKKKKAKK. 2 positions are modified to N6-acetyllysine: Lys7 and Lys26. Residue Lys132 forms a Glycyl lysine isopeptide (Lys-Gly) (interchain with G-Cter in ubiquitin) linkage.

Belongs to the histone H2B family. In terms of assembly, the nucleosome is a histone octamer containing two molecules each of H2A, H2B, H3 and H4 assembled in one H3-H4 heterotetramer and two H2A-H2B heterodimers. The octamer wraps approximately 147 bp of DNA. In terms of processing, can be acetylated to form H2BK6ac and H2BK33ac. Post-translationally, monoubiquitinated to form H2BK143ub1; may give a specific tag for epigenetic transcriptional activation.

It is found in the nucleus. The protein localises to the chromosome. In terms of biological role, core component of nucleosome. Nucleosomes wrap and compact DNA into chromatin, limiting DNA accessibility to the cellular machineries which require DNA as a template. Histones thereby play a central role in transcription regulation, DNA repair, DNA replication and chromosomal stability. DNA accessibility is regulated via a complex set of post-translational modifications of histones, also called histone code, and nucleosome remodeling. The protein is Histone H2B.5 of Triticum aestivum (Wheat).